The sequence spans 2036 residues: Proline-rich protein 12 (2036 aa).

Disordered stretches follow at residues 210 to 283 (GGGV…RALP), 331 to 587 (CSPL…GAPG), and 649 to 697 (APSP…DPQR). Positions 223–240 (QTPPYRPGPPDPPPPPRH) are enriched in pro residues. The span at 249-258 (ASSSAAAAAA) shows a compositional bias: low complexity. 2 positions are modified to phosphoserine: S332 and S340. The span at 340–365 (SPGAGEPSKAGPSGATAGASGRATGP) shows a compositional bias: low complexity. Gly residues-rich tracts occupy residues 367–380 (AAGG…GGGY) and 391–400 (TGKGGYGAAA). 2 stretches are compositionally biased toward low complexity: residues 411–432 (STAT…TGKA) and 441–458 (QAYS…QAYG). A compositionally biased stretch (pro residues) spans 479–490 (PPQPPSGPPPPG). 2 stretches are compositionally biased toward polar residues: residues 493-504 (TCQSYSPDQLQG) and 523-537 (GLPT…STGH). Gly residues predominate over residues 543-558 (GHGGGWGPSSLGGGGE). S651 is modified (phosphoserine). A compositionally biased stretch (gly residues) spans 673 to 683 (GLGGSGGAGGP). Position 738 is a phosphothreonine (T738). Disordered regions lie at residues 758–850 (AFLQ…PLQL), 859–878 (LEPA…DPPG), 886–925 (ALEP…KAPR), and 952–1068 (EMFG…CSTK). Positions 802–817 (LPSVLSHAPSPSPSAS) are enriched in low complexity. The segment covering 833–847 (PQPPPPPPPPPPPMP) has biased composition (pro residues). S865 carries the phosphoserine modification. Residues 1037–1052 (AAPPPPPPPPPPPAPA) are compositionally biased toward pro residues. A phosphoserine mark is found at S1077 and S1135. Disordered regions lie at residues 1120-1260 (RLPD…SLTR), 1294-1347 (RHPP…GGAL), 1376-1573 (TLPS…GEGI), and 1668-1840 (HRPP…PGRL). Low complexity predominate over residues 1182–1194 (PTTAGPASASTPT). Over residues 1199–1208 (KPRGRGRGRG) the composition is skewed to basic residues. A compositionally biased stretch (basic and acidic residues) spans 1209-1223 (RKAEEAGGTRLEPLK). The residue at position 1223 (K1223) is an N6-acetyllysine. Polar residues predominate over residues 1239–1257 (GTSSGDAISGTDHNSLDSS). Residue T1304 is modified to Phosphothreonine. Composition is skewed to pro residues over residues 1306-1317 (PLSPPKSVPPSV) and 1324-1338 (PQPP…PPPS). S1308 bears the Phosphoserine mark. Phosphoserine is present on residues S1381, S1382, and S1387. Composition is skewed to pro residues over residues 1420-1438 (DGPP…PLPG) and 1458-1535 (PPTP…APSP). The segment covering 1541–1553 (PDTRPLHLAKKQE) has biased composition (basic and acidic residues). A Phosphothreonine modification is found at T1561. Position 1568 is a phosphoserine (S1568). Over residues 1691-1703 (APPPKAPAPPPKP) the composition is skewed to pro residues. 2 stretches are compositionally biased toward basic and acidic residues: residues 1704–1715 (ETPEKTTSEKPP) and 1737–1769 (PVEK…RPER). T1705 carries the post-translational modification Phosphothreonine. The segment covering 1817-1829 (GSSSDSESSPGAP) has biased composition (low complexity). A Phosphoserine modification is found at S1925.

The protein resides in the nucleus. It localises to the postsynaptic density. It is found in the synapse. Its subcellular location is the synaptosome. This Homo sapiens (Human) protein is Proline-rich protein 12.